The primary structure comprises 2636 residues: MAHLIAFDHLIPFEMDLHNEENPDYEEKRLRAFSTFYHFGAKLYECLRTVAVLMEEDGDSMPVAEVLRHLGHEHLLSADIQYPPVAHIIDVIEERCLDDTQVLFKISDLLEDHKLEKPEDFLPYSPDPQKIPVDVAADTVTAVASMCYHFLATSFSEEVMRMSSPETARDPIPLESECLKLAIRTGSKKTETIKISDAEPESKPNYRHKPPVVSLELQQNAMLLLATRLGIEQFLILSKECGKLQFEGNHLSRITPLMEAAASSSEMIVELLLDYGMDPNAQSVPNCNTALIYAAATDDRDMVEVILEHEGPHKVDVYLINNYYRDAIMEAAIGESLDTLSLFLEMGYEPKTLKEADETKNDNSPLIFAAMKGFLDIATVILDYQDKNQQKTEEQTREIAEERYCALMEAAMEGQIAACKLLILRGTPTEGFKSNLPSPMMLACAGGFPELVEILLAAGARIDETGPHKNTCLIEACDGVSGDQVSVVRMLLNRHADVNAMNPESGDTPMSLAARHGNIAIMKMLYEKGADLTTGKITPIVEASIETHLECVQFILAHCKTIPQEQLSRALFAAAEGGCLKIVEELVRAGADLNFEQDERTAIMKAARFNHFDIVQYLVYKGASVNFKSAKNDATALSLACTYGNMDIAQFLIRNGADPMLRMDDGVNCFMEAAKHGSFDLMKLLVEFTKGNMDLDKSPPKLGINRCKTNKKKKKSQLRFQSSQILAMLNGKPSSERPFSSTEADMFSHLLKCQQQMVEINIDQSSDIITDPTDVEFLQKAVEGIQEAYGFTPEGQINFPRKPSKADMDSLYQGLLVPNIKMWAETIAHGWMTMERKVGRPIEFNSFRISPEVQIENALSAIQALTAVASGLDNPAYLKSVFNKMNNGEEIPRVPATVGSMNAASAALTGIGIHPDDALRLFAGNTFAKRAFRSSFFLLYHFSANPDDCVHEQYVAVHYMQEGPFRAALLKLDSMYRERKGAAISVQNMVSNFPIDAHQSNPPPAQQTGPKTTSLTTPQPDESNGATTIEHPTTPQIVFKSGGDKTMEALDPMKVYPGVLKLAADMERLYRANQTDVSREIAVTTAYIASTLPEKYSQEFNVESGDRILKRLLSGMSEKQRAAVMTRVKSTINSESGTNLLQRSVGTLSDKRLKEEYIKLFRETADTAFYDKSNRDKGSQQLKAAEQKKGKTSAANVGSQVRLIFLIARSKLLILQISAAGKLLMGKPANNTQVQQQQGQQQQGQLRRTHSEGDGTERAKARSNVIDKATDSTLETPLSIACSNGHREVVELLLKEGANIEHRDKKGFTPLIIAATYGHAPIVEVLLKNHAAIEAQSDRTKDTALSLACTAGRKDVVEMLLAHGANKEHRNVSDYTPLSLASSSGFLDIVNLLLTAGSEINSRTGSKLGISPLMLAAMNGHKETTKVLLEKGSDINAQIETNSYLFYRNTALTLASFQGRFEVVKLLLCYNANVEHRAKTGLTPLMECASGGYVDVGNLLIENGADPNASPVQSTKDTALTIAAEKGHEKFVQMLLDNDVIYDIRNKKGCSALWLACNGGHLGTAQALVFKGADTDMFDNRKMSPMVAAFRKGHIEIIKFLVGHAKQFPNETDLVRMQSTLECADLVARCGECIIIIRNAKKAQAETAEETANRLLQLIDDEKERDINKKQKIKDKKKQKKEAKKKFQAEQEQLSAPPSKPEPVVAPEPEPEPETEPVEEPAFEPTPPPVEEPPKEPPKPRRNRRKTNPDGVPKGSKPAAEQAVKPPPPPVAEEEPEPAELPYRPIVVKIPSPATVQAPMMSPGSYSESEDWQKAGKEGKKVRPKREGRGTAPSSAGSSQAKHRSNTSSISERQHSWEVDTKGVKAYEFTVPGKIVSRVIGKSGSNINAVREATLAQIEIDKLCGSKEDDRHITVRGSADVVSMAVNIIHLLIYDKDVLIHDAIRTATHGNVSVASSLSSEGTSKSAVDSTHSIPHSLSSASIARQSSPVPVPSQCNRSSKSHGNQATKDGANVWQQRMAARGETPPTQTQTKQQPTPSPQVQQPARQTASPAVRQSLAQSSVPQATENVTKPTQTPPASVQQPIDRVIAPPARREPAQVVQPVPPVHQHTPVPQQRPQEVAQPPRFPDPISRPAVSLQQHMQQIQQQPTFSKAPGTRLSNEFSRAPGPPVQPQTPPQSLPSRNDVFEDRLPFTAFKPTAPAPAPVTSIAPSTSTATSTASNGATLDDFDISKLRMYEDSRVQSIWGTDRTNGEEDTWGGLFTNLLQPNSTASSLNTATTKNDTSDWGSNDFMSQLLAGTSNQKTSSAPQQPVSSVNSQLSALETKGWMPSTATPPTARDPVQRQVPLFARSQSSNPSTLQHQQQQQRIMQDPHQSHLHQVMQQQHHSRIPQQFQQPQFSSQSHPSQSSMMPSTQQQLLSQLQAMNLGQQGSNPYDMLAHQLSMHRQENSSSVPGPSQPSANPYYSPSYTDSSVLGQLNMNTLSQRGIKQFDGFNNDQSQSSDGVIAALFNEQQQQKKNQQAGYMQQGQQSFGSTQRIGMMQPAPPPFVPQQAPGAPPGFGDLNRSASGSSQNRPMYPGYGAQQPQPFSQLTQADWDQRLLLQQQQQQRSSQQQQNPTNQGLPQKWSNTWNSSSRM.

11 ANK repeats span residues 252–281 (SRIT…DPNA), 286–317 (NCNT…KVDV), 361–390 (NDNS…KNQQ), 435–464 (NLPS…RIDE), 468–500 (HKNT…DVNA), 505–534 (SGDT…DLTT), 536–564 (KITP…TIPQ), 566–595 (QLSR…DLNF), 598–627 (DERT…SVNF), 632–661 (NDAT…DPML), and 665–695 (DGVN…NMDL). Disordered stretches follow at residues 994–1030 (PIDA…TTIE), 1172–1191 (KSNR…KKGK), and 1230–1268 (NNTQ…VIDK). Residues 1006 to 1030 (QQTGPKTTSLTTPQPDESNGATTIE) show a composition bias toward polar residues. The span at 1233-1245 (QVQQQQGQQQQGQ) shows a compositional bias: low complexity. The segment covering 1249–1260 (THSEGDGTERAK) has biased composition (basic and acidic residues). ANK repeat units follow at residues 1273–1302 (TLET…NIEH), 1306–1335 (KGFT…AIEA), 1340–1369 (TKDT…NKEH), 1373–1402 (SDYT…EINS), 1408–1437 (LGIS…DINA), 1447–1476 (YRNT…NVEH), 1480–1509 (TGLT…DPNA), 1515–1546 (TKDT…DIRN), 1548–1577 (KGCS…DTDM), and 1581–1610 (RKMS…QFPN). Residues 1638–1696 (RNAKKAQAETAEETANRLLQLIDDEKERDINKKQKIKDKKKQKKEAKKKFQAEQEQLSA) are a coiled coil. The interval 1669–1857 (KKQKIKDKKK…SSISERQHSW (189 aa)) is disordered. Residues 1670 to 1686 (KQKIKDKKKQKKEAKKK) show a composition bias toward basic residues. Residues 1698 to 1708 (PSKPEPVVAPE) are compositionally biased toward pro residues. The segment covering 1709–1722 (PEPEPETEPVEEPA) has biased composition (acidic residues). Residues 1811–1829 (DWQKAGKEGKKVRPKREGR) are compositionally biased toward basic and acidic residues. The span at 1832–1851 (APSSAGSSQAKHRSNTSSIS) shows a compositional bias: polar residues. In terms of domain architecture, KH spans 1864 to 1929 (VKAYEFTVPG…DVVSMAVNII (66 aa)). 7 disordered regions span residues 1980–2182 (SASI…SLPS), 2196–2221 (FKPT…STAS), 2269–2292 (NSTA…SNDF), 2301–2320 (SNQK…NSQL), 2352–2417 (SQSS…TQQQ), 2444–2465 (MHRQ…NPYY), and 2539–2636 (GMMQ…SSRM). Residues 1994 to 2008 (SQCNRSSKSHGNQAT) show a composition bias toward polar residues. Residues 2025-2045 (TPPTQTQTKQQPTPSPQVQQP) are compositionally biased toward low complexity. The segment covering 2057-2083 (SLAQSSVPQATENVTKPTQTPPASVQQ) has biased composition (polar residues). 2 stretches are compositionally biased toward low complexity: residues 2099–2119 (QVVQ…QRPQ) and 2139–2148 (QQHMQQIQQQ). A compositionally biased stretch (pro residues) spans 2167–2179 (PGPPVQPQTPPQS). Residues 2269 to 2280 (NSTASSLNTATT) are compositionally biased toward low complexity. Residues 2281-2292 (KNDTSDWGSNDF) are compositionally biased toward polar residues. 2 stretches are compositionally biased toward low complexity: residues 2361–2373 (QHQQ…MQDP) and 2391–2417 (PQQF…TQQQ). Composition is skewed to polar residues over residues 2449–2465 (NSSS…NPYY), 2565–2574 (RSASGSSQNR), and 2583–2595 (QQPQ…TQAD). Low complexity predominate over residues 2599–2615 (RLLLQQQQQQRSSQQQQ). Polar residues predominate over residues 2616 to 2636 (NPTNQGLPQKWSNTWNSSSRM).

Belongs to the mask family.

Its subcellular location is the cytoplasm. In Caenorhabditis briggsae, this protein is Ankyrin repeat and KH domain-containing protein CBG24701.